The following is a 198-amino-acid chain: Recombination protein RecR (198 aa).

Residues 57–72 form a C4-type zinc finger; it reads CSVCGNLTDEDPCAIC. The Toprim domain maps to 80-175; the sequence is STILIVEDSR…KVTRLARGLA (96 aa).

It belongs to the RecR family.

Functionally, may play a role in DNA repair. It seems to be involved in an RecBC-independent recombinational process of DNA repair. It may act with RecF and RecO. The sequence is that of Recombination protein RecR from Streptococcus sanguinis (strain SK36).